A 634-amino-acid polypeptide reads, in one-letter code: 1-deoxy-D-xylulose-5-phosphate synthase (634 aa).

Residues H73 and 114-116 contribute to the thiamine diphosphate site; that span reads GHS. D145 is a Mg(2+) binding site. Thiamine diphosphate contacts are provided by residues 146 to 147, N174, F285, and E367; that span reads GS. N174 is a binding site for Mg(2+).

This sequence belongs to the transketolase family. DXPS subfamily. As to quaternary structure, homodimer. Mg(2+) is required as a cofactor. The cofactor is thiamine diphosphate.

It carries out the reaction D-glyceraldehyde 3-phosphate + pyruvate + H(+) = 1-deoxy-D-xylulose 5-phosphate + CO2. Its pathway is metabolic intermediate biosynthesis; 1-deoxy-D-xylulose 5-phosphate biosynthesis; 1-deoxy-D-xylulose 5-phosphate from D-glyceraldehyde 3-phosphate and pyruvate: step 1/1. Catalyzes the acyloin condensation reaction between C atoms 2 and 3 of pyruvate and glyceraldehyde 3-phosphate to yield 1-deoxy-D-xylulose-5-phosphate (DXP). This Syntrophotalea carbinolica (strain DSM 2380 / NBRC 103641 / GraBd1) (Pelobacter carbinolicus) protein is 1-deoxy-D-xylulose-5-phosphate synthase.